The chain runs to 351 residues: Prostaglandin reductase 2 (351 aa).

A substrate-binding site is contributed by Phe-99–Tyr-100. NADP(+) is bound by residues Gly-165 to Gly-168, Lys-192, Tyr-208, Asn-231, Cys-253 to Tyr-259, Phe-287 to Val-289, and Asn-337. Substrate is bound at residue Leu-288–Leu-290.

Belongs to the NADP-dependent oxidoreductase L4BD family. As to quaternary structure, monomer.

Its subcellular location is the cytoplasm. The catalysed reaction is 13,14-dihydro-15-oxo-prostaglandin E2 + NAD(+) = 15-oxoprostaglandin E2 + NADH + H(+). The enzyme catalyses 13,14-dihydro-15-oxo-prostaglandin E2 + NADP(+) = 15-oxoprostaglandin E2 + NADPH + H(+). It carries out the reaction 13,14-dihydro-15-oxo-PGF2alpha + NADP(+) = 15-oxoprostaglandin F2alpha + NADPH + H(+). It catalyses the reaction 13,14-dihydro-15-oxo-prostaglandin E1 + NADP(+) = 15-oxoprostaglandin E1 + NADPH + H(+). The catalysed reaction is 13,14-dihydro-15-oxo-prostaglandin F1alpha + NADP(+) = 15-oxoprostaglandin F1alpha + NADPH + H(+). In terms of biological role, functions as 15-oxo-prostaglandin 13-reductase and acts on 15-keto-PGE1, 15-keto-PGE2, 15-keto-PGE1-alpha and 15-keto-PGE2-alpha with highest activity towards 15-keto-PGE2. Overexpression represses transcriptional activity of PPARG and inhibits adipocyte differentiation. This is Prostaglandin reductase 2 (PTGR2) from Pongo abelii (Sumatran orangutan).